Consider the following 432-residue polypeptide: Adenylosuccinate synthetase (432 aa).

GTP contacts are provided by residues Gly-12–Lys-18 and Gly-40–Thr-42. The active-site Proton acceptor is the Asp-13. The Mg(2+) site is built by Asp-13 and Gly-40. Residues Asp-13 to Lys-16, Asn-38 to His-41, Thr-128, Arg-142, Gln-223, Thr-238, and Arg-302 contribute to the IMP site. The active-site Proton donor is His-41. Thr-298 to Arg-304 lines the substrate pocket. Residues Arg-304, His-330 to Asp-332, and Gly-417 to Gly-419 contribute to the GTP site.

Belongs to the adenylosuccinate synthetase family. In terms of assembly, homodimer. Requires Mg(2+) as cofactor.

It localises to the cytoplasm. It carries out the reaction IMP + L-aspartate + GTP = N(6)-(1,2-dicarboxyethyl)-AMP + GDP + phosphate + 2 H(+). The protein operates within purine metabolism; AMP biosynthesis via de novo pathway; AMP from IMP: step 1/2. Plays an important role in the de novo pathway of purine nucleotide biosynthesis. Catalyzes the first committed step in the biosynthesis of AMP from IMP. The polypeptide is Adenylosuccinate synthetase (Symbiobacterium thermophilum (strain DSM 24528 / JCM 14929 / IAM 14863 / T)).